A 184-amino-acid polypeptide reads, in one-letter code: ATP synthase subunit b, chloroplastic (184 aa).

Residues 27 to 49 traverse the membrane as a helical segment; the sequence is LATNLINLSVVLGVLIFFGKGVL.

It belongs to the ATPase B chain family. As to quaternary structure, F-type ATPases have 2 components, F(1) - the catalytic core - and F(0) - the membrane proton channel. F(1) has five subunits: alpha(3), beta(3), gamma(1), delta(1), epsilon(1). F(0) has four main subunits: a(1), b(1), b'(1) and c(10-14). The alpha and beta chains form an alternating ring which encloses part of the gamma chain. F(1) is attached to F(0) by a central stalk formed by the gamma and epsilon chains, while a peripheral stalk is formed by the delta, b and b' chains.

It localises to the plastid. Its subcellular location is the chloroplast thylakoid membrane. Its function is as follows. F(1)F(0) ATP synthase produces ATP from ADP in the presence of a proton or sodium gradient. F-type ATPases consist of two structural domains, F(1) containing the extramembraneous catalytic core and F(0) containing the membrane proton channel, linked together by a central stalk and a peripheral stalk. During catalysis, ATP synthesis in the catalytic domain of F(1) is coupled via a rotary mechanism of the central stalk subunits to proton translocation. Functionally, component of the F(0) channel, it forms part of the peripheral stalk, linking F(1) to F(0). This chain is ATP synthase subunit b, chloroplastic, found in Helianthus annuus (Common sunflower).